Reading from the N-terminus, the 246-residue chain is 3-deoxy-manno-octulosonate cytidylyltransferase (246 aa).

This sequence belongs to the KdsB family.

It localises to the cytoplasm. It carries out the reaction 3-deoxy-alpha-D-manno-oct-2-ulosonate + CTP = CMP-3-deoxy-beta-D-manno-octulosonate + diphosphate. It functions in the pathway nucleotide-sugar biosynthesis; CMP-3-deoxy-D-manno-octulosonate biosynthesis; CMP-3-deoxy-D-manno-octulosonate from 3-deoxy-D-manno-octulosonate and CTP: step 1/1. Its pathway is bacterial outer membrane biogenesis; lipopolysaccharide biosynthesis. Functionally, activates KDO (a required 8-carbon sugar) for incorporation into bacterial lipopolysaccharide in Gram-negative bacteria. The polypeptide is 3-deoxy-manno-octulosonate cytidylyltransferase (Bradyrhizobium sp. (strain BTAi1 / ATCC BAA-1182)).